The chain runs to 403 residues: F-box only protein 22 (403 aa).

An N-acetylmethionine modification is found at M1. The F-box domain occupies S19 to A71. Phosphoserine is present on S128. Residue K194 is modified to N6-acetyllysine.

In terms of assembly, directly interacts with SKP1 and CUL1.

It localises to the cytoplasm. The protein resides in the myofibril. The protein localises to the sarcomere. Its subcellular location is the z line. Its function is as follows. Substrate-recognition component of the SCF (SKP1-CUL1-F-box protein)-type E3 ubiquitin ligase complex. Promotes the proteasome-dependent degradation of key sarcomeric proteins, such as alpha-actinin (ACTN2) and filamin-C (FLNC), essential for maintenance of normal contractile function. This Pongo abelii (Sumatran orangutan) protein is F-box only protein 22 (FBXO22).